A 702-amino-acid polypeptide reads, in one-letter code: Threonine--tRNA ligase (702 aa).

The tract at residues 1–30 (MSAPVHPVPGADGGDPLRPATPGLRSPQVP) is disordered. A TGS domain is found at 15-84 (DPLRPATPGL…DVDVEVTPVP (70 aa)). The segment at 279–585 (DHRKLGIELD…LTEHYAGAFP (307 aa)) is catalytic. Residues cysteine 384, histidine 435, and histidine 562 each contribute to the Zn(2+) site.

This sequence belongs to the class-II aminoacyl-tRNA synthetase family. As to quaternary structure, homodimer. Requires Zn(2+) as cofactor.

Its subcellular location is the cytoplasm. It catalyses the reaction tRNA(Thr) + L-threonine + ATP = L-threonyl-tRNA(Thr) + AMP + diphosphate + H(+). Catalyzes the attachment of threonine to tRNA(Thr) in a two-step reaction: L-threonine is first activated by ATP to form Thr-AMP and then transferred to the acceptor end of tRNA(Thr). Also edits incorrectly charged L-seryl-tRNA(Thr). This chain is Threonine--tRNA ligase, found in Mycobacterium leprae (strain Br4923).